Here is a 175-residue protein sequence, read N- to C-terminus: Transcription factor E (175 aa).

The region spanning 3–88 (ENPLIQQVLF…TWKPSLEKVP (86 aa)) is the HTH TFE/IIEalpha-type domain.

It belongs to the TFE family. Monomer. Interaction with RNA polymerase subunits RpoF and RpoE is necessary for Tfe stimulatory transcription activity. Able to interact with Tbp and RNA polymerase in the absence of DNA promoter. Interacts both with the preinitiation and elongation complexes.

Transcription factor that plays a role in the activation of archaeal genes transcribed by RNA polymerase. Facilitates transcription initiation by enhancing TATA-box recognition by TATA-box-binding protein (Tbp), and transcription factor B (Tfb) and RNA polymerase recruitment. Not absolutely required for transcription in vitro, but particularly important in cases where Tbp or Tfb function is not optimal. It dynamically alters the nucleic acid-binding properties of RNA polymerases by stabilizing the initiation complex and destabilizing elongation complexes. Seems to translocate with the RNA polymerase following initiation and acts by binding to the non template strand of the transcription bubble in elongation complexes. The chain is Transcription factor E from Methanococcus maripaludis (strain DSM 14266 / JCM 13030 / NBRC 101832 / S2 / LL).